The sequence spans 448 residues: Tubulin alpha-2 chain (448 aa).

Glutamine 11, glutamate 69, serine 138, glycine 142, threonine 143, threonine 177, asparagine 204, and asparagine 226 together coordinate GTP. Glutamate 69 is a binding site for Mg(2+). Glutamate 252 is a catalytic residue. Residues 428–448 form a disordered region; the sequence is KDYEEVGADSNEGGEEEGEEY. Over residues 429 to 448 the composition is skewed to acidic residues; the sequence is DYEEVGADSNEGGEEEGEEY.

It belongs to the tubulin family. In terms of assembly, dimer of alpha and beta chains. A typical microtubule is a hollow water-filled tube with an outer diameter of 25 nm and an inner diameter of 15 nM. Alpha-beta heterodimers associate head-to-tail to form protofilaments running lengthwise along the microtubule wall with the beta-tubulin subunit facing the microtubule plus end conferring a structural polarity. Microtubules usually have 13 protofilaments but different protofilament numbers can be found in some organisms and specialized cells. Mg(2+) serves as cofactor. In terms of processing, undergoes a tyrosination/detyrosination cycle, the cyclic removal and re-addition of a C-terminal tyrosine residue. Expressed in intestine, pharyngeal muscle cells, and a subset of neurons.

It is found in the cytoplasm. Its subcellular location is the cytoskeleton. It carries out the reaction GTP + H2O = GDP + phosphate + H(+). Tubulin is the major constituent of microtubules, a cylinder consisting of laterally associated linear protofilaments composed of alpha- and beta-tubulin heterodimers. Microtubules grow by the addition of GTP-tubulin dimers to the microtubule end, where a stabilizing cap forms. Below the cap, tubulin dimers are in GDP-bound state, owing to GTPase activity of alpha-tubulin. Required for the normal dynamic behavior of the non-centrosomal microtubules in the epidermal syncytium. Involved in the redistribution of microtubule end-binding protein EB1/ebp-2 caused by wounding. Required to modulate expression in the epidermis of antimicrobial peptides, such as nlp-29, after wounding, or fungal infection. The polypeptide is Tubulin alpha-2 chain (tba-2) (Caenorhabditis elegans).